The primary structure comprises 565 residues: Thiol:disulfide interchange protein DsbD (565 aa).

Positions 1–19 (MAQRIFTLILLLCSTSVFA) are cleaved as a signal peptide. 2 disulfides stabilise this stretch: C122/C128 and C182/C304. 7 helical membrane passes run 163–183 (LPFSALWALLIGIGIAFTPCV), 208–228 (LLTFIYVQGMALTYTALGLVV), 243–263 (YVLIGLAIVFTLLAMSMFGLF), 289–309 (GVFIMGAIAGLICSPCTTAPL), 323–343 (WLGGGTLYLYALGMGLPLMLI), 357–377 (WMEQVKTAFGFVILALPVFLL), and 384–404 (IWGLRLWSALGVAFFGWAFIT). Residues 434 to 565 (WAFGATHTAQ…FSAHLRDRQP (132 aa)) form the Thioredoxin domain. A disulfide bond links C480 and C483.

This sequence belongs to the thioredoxin family. DsbD subfamily.

The protein localises to the cell inner membrane. It carries out the reaction [protein]-dithiol + NAD(+) = [protein]-disulfide + NADH + H(+). The catalysed reaction is [protein]-dithiol + NADP(+) = [protein]-disulfide + NADPH + H(+). Functionally, required to facilitate the formation of correct disulfide bonds in some periplasmic proteins and for the assembly of the periplasmic c-type cytochromes. Acts by transferring electrons from cytoplasmic thioredoxin to the periplasm. This transfer involves a cascade of disulfide bond formation and reduction steps. This is Thiol:disulfide interchange protein DsbD from Escherichia coli O6:H1 (strain CFT073 / ATCC 700928 / UPEC).